The following is a 380-amino-acid chain: Ubiquitin-like protein 7 (380 aa).

In terms of domain architecture, Ubiquitin-like spans 18-98 (APKSILQLPE…VLRKSWPEPD (81 aa)). Residues 200–313 (TPMPGADSSS…SSGVQSGTPI (114 aa)) are disordered. The span at 206–221 (DSSSRSMPSSSYRDMP) shows a compositional bias: low complexity. The residue at position 230 (Ser-230) is a Phosphoserine. Low complexity-rich tracts occupy residues 239 to 253 (STRS…SSRP) and 270 to 293 (SELA…TPGT). Residues 294–313 (QGHSSGTSPMSSGVQSGTPI) are compositionally biased toward polar residues. Residues 333–377 (SLQIQWQPQLQQLRDMGIQDDELSLRALQATGGDIQAALELIFAG) enclose the UBA domain.

In terms of assembly, binds ubiquitin. Interacts with MAVS; this interaction enhances TRIM21-dependent 'Lys-27'-linked polyubiquitination of MAVS. Deubiquitinated by OTUD4 which stabilizes UBL7 expression.

Interferon-stimulated protein that positively regulates RNA virus-triggered innate immune signaling. Mechanistically, promotes 'Lys-27'-linked polyubiquitination of MAVS through TRIM21 leading to enhanced the IFN signaling pathway. The protein is Ubiquitin-like protein 7 (Ubl7) of Mus musculus (Mouse).